Here is a 652-residue protein sequence, read N- to C-terminus: Forkhead box protein O1-A (652 aa).

3 disordered regions span residues 1 to 57, 208 to 277, and 359 to 406; these read MADA…EPSS, SSWW…NSHS, and NLLS…QQTQ. A compositionally biased stretch (polar residues) spans 41 to 57; it reads DSNTSSPAPSVKQEPSS. Residues 134-228 constitute a DNA-binding region (fork-head); the sequence is WGNMSYADLI…KSGKSPRRRA (95 aa). Residues 238 to 249 show a composition bias toward basic residues; that stretch reads AKSRGRAAKKKL. Over residues 362–397 the composition is skewed to low complexity; sequence SPKNPSTGGPGSGSNQSSPSSLMQASPGYSPYSSPG.

The protein localises to the cytoplasm. The protein resides in the nucleus. Functionally, transcription factor that regulates metabolic homeostasis in response to oxidative stress. Binds to the consensus sequence 5'-TT[G/A]TTTTG-3' and the related Daf-16 family binding element (DBE) with consensus sequence 5'-TT[G/A]TTTAC-3'. Main regulator of redox balance and osteoblast numbers and controls bone mass. Orchestrates the endocrine function of the skeleton in regulating glucose metabolism. May be involved in regulating cellular homeostasis in the eye. May act as a positive regulator of apoptosis in cardiac smooth muscle cells as a result of its transcriptional activation of pro-apoptotic genes. The polypeptide is Forkhead box protein O1-A (foxo1a) (Danio rerio (Zebrafish)).